The primary structure comprises 223 residues: MNTWKEAIGQEKQQPYFQHILQQVQQARQSGRTIYPPQEEVFSAFRLTEFDQVRVVILGQDPYHGVNQAHGLAFSVKPGIAPPPSLVNIYKELSTDIMGFQTPSHGYLVGWAKQGVLLLNTVLTVEQGLAHSHANFGWETFTDRVIHVLNEQRDHLVFLLWGSHAQKKGQFIDRTKHCVLTSPHPSPLSAHRGFFGCRHFSKTNQYLRHHNLTEINWQLPMTI.

Aspartate 61 acts as the Proton acceptor in catalysis.

This sequence belongs to the uracil-DNA glycosylase (UDG) superfamily. UNG family.

It is found in the cytoplasm. It carries out the reaction Hydrolyzes single-stranded DNA or mismatched double-stranded DNA and polynucleotides, releasing free uracil.. Excises uracil residues from the DNA which can arise as a result of misincorporation of dUMP residues by DNA polymerase or due to deamination of cytosine. The polypeptide is Uracil-DNA glycosylase (Histophilus somni (strain 129Pt) (Haemophilus somnus)).